The chain runs to 352 residues: rRNA 2'-O-methyltransferase fibrillarin (352 aa).

The interval 1–115 is disordered; that stretch reads MGRPEFNRGG…GGAGGMRGGK (115 aa). 22 positions are modified to asymmetric dimethylarginine: arginine 8, arginine 16, arginine 19, arginine 23, arginine 27, arginine 35, arginine 43, arginine 51, arginine 55, arginine 58, arginine 63, arginine 67, arginine 70, arginine 75, arginine 81, arginine 85, arginine 91, arginine 95, arginine 98, arginine 102, arginine 105, and arginine 112. Positions 8-18 are enriched in gly residues; sequence RGGGGGGFRGG. Residues 26–59 are compositionally biased toward gly residues; sequence SRGGFGGGGRGGYGGGDRGSFGGGDRGGFRGGRG. Residues 66 to 113 are compositionally biased toward gly residues; it reads FRGGRGGGDRGGFGGRGSPRGGFGGRGSPRGGRGSPRGGRGGAGGMRG. S-adenosyl-L-methionine is bound by residues 203–204, 222–223, 247–248, and 267–270; these read TT, EF, DA, and DVAQ.

This sequence belongs to the methyltransferase superfamily. Fibrillarin family. Component of box C/D small nucleolar ribonucleoprotein (snoRNP) particles. It is associated with the U3, U8 and U13 small nuclear RNAs. By homology to other fibrillarins, some or all of the N-terminal domain arginines are modified to asymmetric dimethylarginine (DMA).

The protein localises to the nucleus. The protein resides in the nucleolus. It localises to the nucleoplasm. It catalyses the reaction L-glutaminyl-[histone H2A] + S-adenosyl-L-methionine = N(5)-methyl-L-glutaminyl-[histone H2A] + S-adenosyl-L-homocysteine + H(+). S-adenosyl-L-methionine-dependent methyltransferase that has the ability to methylate both RNAs and proteins. Involved in pre-rRNA processing. Utilizes the methyl donor S-adenosyl-L-methionine to catalyze the site-specific 2'-hydroxyl methylation of ribose moieties in pre-ribosomal RNA. Site specificity is provided by a guide RNA that base pairs with the substrate. Methylation occurs at a characteristic distance from the sequence involved in base pairing with the guide RNA. Also acts as a protein methyltransferase by mediating methylation of 'Gln-105' of histone H2A (H2AQ105me), a modification that impairs binding of the FACT complex and is specifically present at 35S ribosomal DNA locus. Plays a role in modulation of nucleolus size most likely through regulating the ribosomal RNA (rRNA) pool. This is rRNA 2'-O-methyltransferase fibrillarin from Caenorhabditis elegans.